Reading from the N-terminus, the 523-residue chain is Na(+)/H(+) antiporter NhaB (523 aa).

The next 10 membrane-spanning stretches (helical) occupy residues 28–48, 51–71, 89–109, 137–157, 237–257, 302–322, 347–367, 390–410, 445–465, and 476–496; these read FLII…WLLV, FIFT…GLLA, LSAN…IYFV, MAAF…VISI, FFIR…ATCV, AIIC…VGLI, TESL…AVII, LFYI…VGTV, VATP…LAPL, and MALP…MYLL.

Belongs to the NhaB Na(+)/H(+) (TC 2.A.34) antiporter family.

The protein localises to the cell inner membrane. It catalyses the reaction 2 Na(+)(in) + 3 H(+)(out) = 2 Na(+)(out) + 3 H(+)(in). Its function is as follows. Na(+)/H(+) antiporter that extrudes sodium in exchange for external protons. This chain is Na(+)/H(+) antiporter NhaB, found in Tolumonas auensis (strain DSM 9187 / NBRC 110442 / TA 4).